The following is a 500-amino-acid chain: MTELVQDENKLIAERRAKLDHIRTQCPANAHPNTWERSHKAAELQAQYGENTKEELEALGYQTSIAGRVMAKRGPFLVIQDVSGRIQAYAGKPVQGDLKERYQGLDIGDIIGVKGQLHLSGKGDLYVNMEEYQLLTKALRPLPEKFHGLTDQETRYRQRYVDLIVNEESRNAFIMRSKVVSAIRNFMIKKEFMEVETPMMHVIPGGASARPFVTHHNALDMAMYLRIAPELYLKRLVVGGFERVFEINRNFRNEGLSPRHNPEFTMMEFYMAYADYQDLMDLTEEMLSSIAIDLLGSAQMPYGEHTVDFGGPYARLSMLEAIQKYNPENATIQAMTYEQVKDVEFMRDLASSLGIKLEKFWTCGQLLEEIFGETAEPKLMQPTFITGYPADISPLARRNDNNDFITDRFEFFIGGREVANGFSELNDAQDQDNRFKAQVNAKDAGDDEAMFYDADYITALEHGLPPTAGQGIGIDRLVMLFTNTHTIRDVILFPAMRPQA.

Residues Glu410 and Glu417 each contribute to the Mg(2+) site.

The protein belongs to the class-II aminoacyl-tRNA synthetase family. Homodimer. Mg(2+) serves as cofactor.

The protein resides in the cytoplasm. It carries out the reaction tRNA(Lys) + L-lysine + ATP = L-lysyl-tRNA(Lys) + AMP + diphosphate. The protein is Lysine--tRNA ligase of Shewanella denitrificans (strain OS217 / ATCC BAA-1090 / DSM 15013).